The sequence spans 166 residues: Disulfide bond formation protein B (166 aa).

Over 1–11 (MIALPRNRRPL) the chain is Cytoplasmic. A helical membrane pass occupies residues 12-28 (FLAVFAYCAALLAFGLY). Residues 29 to 46 (LQHYQGIEPCPMCIMQRY) are Periplasmic-facing. A disulfide bridge connects residues Cys38 and Cys41. The helical transmembrane segment at 47–63 (AFALVGVIALVAGLHGP) threads the bilayer. Residues 64-70 (RGAGVRV) are Cytoplasmic-facing. Residues 71–87 (YGGLLLLTALAGGSVAA) traverse the membrane as a helical segment. The Periplasmic portion of the chain corresponds to 88 to 143 (RQTWMQLYPPEIPECGPGLEYMLESFPLTSALPMIFRGAGDCSAIDWTFLGLSLAN). An intrachain disulfide couples Cys102 to Cys129. The helical transmembrane segment at 144–162 (WSLLNFGAAALLALWLLFG) threads the bilayer. The Cytoplasmic portion of the chain corresponds to 163–166 (RRVR).

It belongs to the DsbB family.

It localises to the cell inner membrane. Functionally, required for disulfide bond formation in some periplasmic proteins. Acts by oxidizing the DsbA protein. In Azoarcus sp. (strain BH72), this protein is Disulfide bond formation protein B.